The primary structure comprises 1782 residues: Vitellogenin receptor (1782 aa).

Positions 1-18 are cleaved as a signal peptide; it reads MRFIVLLFICSFIYPCYV. The Extracellular segment spans residues 19 to 1663; that stretch reads SSIGFRRISK…SINFSRNTRN (1645 aa). 3 consecutive LDL-receptor class A domains span residues 35 to 72, 81 to 118, and 122 to 157; these read KCEDGYFQCNSGECIPVDKKCDYIDHCIDGSDEDFECD, TCAKDQFKCKNQECIPAAKYCDMVNDCLDESDEHDGCV, and NCTNKFLCTDGHCINKEWVCDGRNDCPDGNDEWNCK. 6 disulfides stabilise this stretch: Cys36-Cys48, Cys43-Cys61, Cys55-Cys71, Cys82-Cys94, Cys89-Cys107, and Cys101-Cys117. An N-linked (GlcNAc...) asparagine glycan is attached at Asn122. 3 disulfides stabilise this stretch: Cys123–Cys134, Cys129–Cys147, and Cys141–Cys156. The N-linked (GlcNAc...) asparagine glycan is linked to Asn159. Residues 166–205 form the LDL-receptor class A 4 domain; the sequence is SCKTENYQYMCANHRCISLKVVCDKKDDCGDGSDEGPGCT. 3 disulfides stabilise this stretch: Cys167–Cys181, Cys176–Cys194, and Cys188–Cys204. N-linked (GlcNAc...) asparagine glycans are attached at residues Asn208 and Asn239. An EGF-like 1 domain is found at 208-243; it reads NCSSAGCQSNCHQTPKGSVCTCKPGYKLQKDNRTCN. The 40-residue stretch at 244–283 folds into the EGF-like; calcium-binding domain; the sequence is DIDECQAYGICDQDCMNVPGSYACTCQREYYLENDKRTCK. Cystine bridges form between Cys248-Cys258, Cys254-Cys267, and Cys269-Cys282. LDL-receptor class B repeat units follow at residues 327–374, 375–416, 417–460, 461–501, and 502–544; these read DYVY…DWIT, KNIY…LPTQ, GKMY…DYPN, ERLY…TVFQ, and NKLY…DHSA. Residues 552 to 588 form the EGF-like 2 domain; that stretch reads PCYSNPCSQLCMLNQNKGYTCGCTLDKKLNADKHTCQ. Residues Asn702, Asn859, Asn896, and Asn923 are each glycosylated (N-linked (GlcNAc...) asparagine). In terms of domain architecture, EGF-like 3 spans 889 to 927; sequence DCQKNNGNCSHVCLPSLITSFICACPPGMELSNDNRTCI. LDL-receptor class A domains follow at residues 931-969, 973-1009, 1012-1049, 1052-1090, and 1094-1131; these read ECSKNEYKCSEHNICIQRNQLCDGIENCPNGEDETSECR, RCKENQFMCKNGDCIRLKDRCNSRYDCTDQSDEQNCE, KCKSDEFQCKFTETCIPKTKMCDSNPDCDDLSDEEDCR, ECTSNEFKCNNGKCIPNTFVCDNDNDCEDGEDEAAEKCY, and ACKMPKMFKCPNGDCISDSLLCNGINDCNDGSDEVHCL. Cystine bridges form between Cys932–Cys945, Cys939–Cys958, Cys952–Cys968, Cys974–Cys986, Cys981–Cys999, Cys993–Cys1008, Cys1013–Cys1026, Cys1020–Cys1039, Cys1033–Cys1048, Cys1053–Cys1065, Cys1060–Cys1078, Cys1072–Cys1089, Cys1095–Cys1108, Cys1103–Cys1121, and Cys1115–Cys1130. Asn1133 and Asn1140 each carry an N-linked (GlcNAc...) asparagine glycan. LDL-receptor class A domains follow at residues 1140 to 1177, 1178 to 1214, and 1225 to 1260; these read NCSLNEYRCLGTDICLPKNVRCDGKNDCPQSDDEQNCT, YCFENEFACDNKRCIPELWVCDKANDCGDNSDEKNCD, and ECDEFKCSVGTCLPYSKVCDGNRDCPDGSDETGKCQ. Cystine bridges form between Cys1141/Cys1154, Cys1148/Cys1167, Cys1161/Cys1176, Cys1179/Cys1191, Cys1186/Cys1204, Cys1198/Cys1213, Cys1226/Cys1236, Cys1231/Cys1249, and Cys1243/Cys1259. Asn1175 carries N-linked (GlcNAc...) asparagine glycosylation. The EGF-like 4 domain maps to 1262–1298; it reads ACTVNNFCKGMCYKTPAGAVCGCQSGYRLAVDMISCE. LDL-receptor class B repeat units lie at residues 1385–1425, 1471–1518, and 1519–1561; these read DSVY…DWIT, RWLF…DHVK, and SKLY…FEQS. Residues Asn1626, Asn1640, and Asn1656 are each glycosylated (N-linked (GlcNAc...) asparagine). The chain crosses the membrane as a helical span at residues 1664–1684; it reads ISGIYSITIIVLLVSVLLLCV. Over 1685 to 1782 the chain is Cytoplasmic; the sequence is YYYYQKNKLK…ALIYFVHNSK (98 aa).

Expressed in ovaries of reproductive females.

It is found in the membrane. In terms of biological role, involved in uptake of vitellogenin by endocytosis. Expression is regulated by the juvenile hormone analog, methoprene (in vitro). The polypeptide is Vitellogenin receptor (Solenopsis invicta (Red imported fire ant)).